The sequence spans 178 residues: 2-C-methyl-D-erythritol 2,4-cyclodiphosphate synthase (178 aa).

The a divalent metal cation site is built by D24, H26, and H61. Position 24 to 26 (24 to 26 (DSH)) interacts with 4-CDP-2-C-methyl-D-erythritol 2-phosphate. 150 to 153 (TSGE) serves as a coordination point for 4-CDP-2-C-methyl-D-erythritol 2-phosphate.

This sequence belongs to the IspF family. As to quaternary structure, homotrimer. The cofactor is a divalent metal cation.

It carries out the reaction 4-CDP-2-C-methyl-D-erythritol 2-phosphate = 2-C-methyl-D-erythritol 2,4-cyclic diphosphate + CMP. Its pathway is isoprenoid biosynthesis; isopentenyl diphosphate biosynthesis via DXP pathway; isopentenyl diphosphate from 1-deoxy-D-xylulose 5-phosphate: step 4/6. Functionally, involved in the biosynthesis of isopentenyl diphosphate (IPP) and dimethylallyl diphosphate (DMAPP), two major building blocks of isoprenoid compounds. Catalyzes the conversion of 4-diphosphocytidyl-2-C-methyl-D-erythritol 2-phosphate (CDP-ME2P) to 2-C-methyl-D-erythritol 2,4-cyclodiphosphate (ME-CPP) with a corresponding release of cytidine 5-monophosphate (CMP). The chain is 2-C-methyl-D-erythritol 2,4-cyclodiphosphate synthase from Chlamydia trachomatis serovar L2 (strain ATCC VR-902B / DSM 19102 / 434/Bu).